A 333-amino-acid chain; its full sequence is Cytosolic Fe-S cluster assembly factor NBP35 (333 aa).

4 residues coordinate [4Fe-4S] cluster: cysteine 32, cysteine 46, cysteine 49, and cysteine 55. Residue 85–92 (GKGGVGKS) participates in ATP binding. Cysteine 258 and cysteine 261 together coordinate [4Fe-4S] cluster.

The protein belongs to the Mrp/NBP35 ATP-binding proteins family. NUBP1/NBP35 subfamily. In terms of assembly, heterotetramer of 2 NBP35 and 2 CFD1 chains. It depends on [4Fe-4S] cluster as a cofactor.

The protein resides in the cytoplasm. It is found in the nucleus. In terms of biological role, component of the cytosolic iron-sulfur (Fe/S) protein assembly (CIA) machinery. Required for maturation of extramitochondrial Fe-S proteins. The NBP35-CFD1 heterotetramer forms a Fe-S scaffold complex, mediating the de novo assembly of an Fe-S cluster and its transfer to target apoproteins. Required for biogenesis and export of both ribosomal subunits, which may reflect a role in assembly of the Fe/S clusters in RLI1, a protein which performs rRNA processing and ribosome export. The sequence is that of Cytosolic Fe-S cluster assembly factor NBP35 from Eremothecium gossypii (strain ATCC 10895 / CBS 109.51 / FGSC 9923 / NRRL Y-1056) (Yeast).